Consider the following 101-residue polypeptide: Urease subunit beta (101 aa).

This sequence belongs to the urease beta subunit family. In terms of assembly, heterotrimer of UreA (gamma), UreB (beta) and UreC (alpha) subunits. Three heterotrimers associate to form the active enzyme.

It is found in the cytoplasm. It catalyses the reaction urea + 2 H2O + H(+) = hydrogencarbonate + 2 NH4(+). It functions in the pathway nitrogen metabolism; urea degradation; CO(2) and NH(3) from urea (urease route): step 1/1. This Psychromonas ingrahamii (strain DSM 17664 / CCUG 51855 / 37) protein is Urease subunit beta.